A 102-amino-acid polypeptide reads, in one-letter code: Integration host factor subunit alpha (102 aa).

It belongs to the bacterial histone-like protein family. As to quaternary structure, heterodimer of an alpha and a beta chain.

In terms of biological role, this protein is one of the two subunits of integration host factor, a specific DNA-binding protein that functions in genetic recombination as well as in transcriptional and translational control. In Chromohalobacter salexigens (strain ATCC BAA-138 / DSM 3043 / CIP 106854 / NCIMB 13768 / 1H11), this protein is Integration host factor subunit alpha.